Reading from the N-terminus, the 408-residue chain is RNA-splicing ligase RtcB (408 aa).

Asp75, Cys78, His168, His185, and His281 together coordinate Mn(2+). GMP is bound at residue 167–171 (NHFIE). GMP-binding positions include 281 to 282 (HN), 313 to 316 (PGSM), Ser320, 337 to 340 (HGAG), and Lys407. His337 (GMP-histidine intermediate) is an active-site residue.

The protein belongs to the RtcB family. In terms of assembly, monomer. Requires Mn(2+) as cofactor.

The catalysed reaction is a 3'-end 3'-phospho-ribonucleotide-RNA + a 5'-end dephospho-ribonucleoside-RNA + GTP = a ribonucleotidyl-ribonucleotide-RNA + GMP + diphosphate. It catalyses the reaction a 3'-end 2',3'-cyclophospho-ribonucleotide-RNA + a 5'-end dephospho-ribonucleoside-RNA + GTP + H2O = a ribonucleotidyl-ribonucleotide-RNA + GMP + diphosphate + H(+). Functionally, GTP-dependent RNA ligase that is involved in RNA repair. Joins RNA with 2',3'-cyclic-phosphate or 3'-phosphate ends to RNA with 5'-hydroxy ends. Also acts as a DNA ligase in case of DNA damage by splicing 'dirty' DNA breaks, characterized by 3'-phosphate (or cyclic-phosphate) and 5'-hydroxy ends that cannot be sealed by classical DNA ligases. Repairs tRNA cleaved by colicins D or E5, does not repair damaged 16S rRNA. Its function is as follows. Able to catalyze tRNA splicing in vivo in yeast, but bacteria are not known to splice tRNA. In Escherichia coli (strain K12), this protein is RNA-splicing ligase RtcB.